Consider the following 139-residue polypeptide: Large ribosomal subunit protein uL14 (139 aa).

This sequence belongs to the universal ribosomal protein uL14 family.

This Syntrichia ruralis (Great hairy screw-moss) protein is Large ribosomal subunit protein uL14 (RPL23).